Consider the following 550-residue polypeptide: Arginine--tRNA ligase (550 aa).

The 'HIGH' region signature appears at A130–G140.

It belongs to the class-I aminoacyl-tRNA synthetase family. Monomer.

It localises to the cytoplasm. The catalysed reaction is tRNA(Arg) + L-arginine + ATP = L-arginyl-tRNA(Arg) + AMP + diphosphate. The chain is Arginine--tRNA ligase from Mycobacterium sp. (strain JLS).